Consider the following 461-residue polypeptide: Tol-Pal system protein TolB 2 (461 aa).

The first 20 residues, 1 to 20, serve as a signal peptide directing secretion; sequence MKIRHLLLLAGLVSAPAIVA. The tract at residues 28–47 is disordered; the sequence is SSSAAQASGDDDGGLTGSVS.

The protein belongs to the TolB family. In terms of assembly, the Tol-Pal system is composed of five core proteins: the inner membrane proteins TolA, TolQ and TolR, the periplasmic protein TolB and the outer membrane protein Pal. They form a network linking the inner and outer membranes and the peptidoglycan layer.

The protein resides in the periplasm. Functionally, part of the Tol-Pal system, which plays a role in outer membrane invagination during cell division and is important for maintaining outer membrane integrity. In Novosphingobium aromaticivorans (strain ATCC 700278 / DSM 12444 / CCUG 56034 / CIP 105152 / NBRC 16084 / F199), this protein is Tol-Pal system protein TolB 2.